The following is a 103-amino-acid chain: Large ribosomal subunit protein uL24 (103 aa).

The protein belongs to the universal ribosomal protein uL24 family. In terms of assembly, part of the 50S ribosomal subunit.

Its function is as follows. One of two assembly initiator proteins, it binds directly to the 5'-end of the 23S rRNA, where it nucleates assembly of the 50S subunit. Functionally, one of the proteins that surrounds the polypeptide exit tunnel on the outside of the subunit. This is Large ribosomal subunit protein uL24 from Actinobacillus pleuropneumoniae serotype 3 (strain JL03).